Here is a 288-residue protein sequence, read N- to C-terminus: MAAKIIDGKTIAQQVRSEVAQKVQARIAAGLRAPGLAVVLVGSNPASQIYVASKRKACEEVGFVSRSYDLPETTSEAELLELIDALNADNTIDGILVQLPLPAGIDNVKVLERIHPDKDVDGFHPYNVGRLCQRAPRLRPCTPRGIVTLLERYNIDTFGLNAVVIGASNIVGRPMSMELLLAGCTTTVTHRFTKNLRHHVENADLLIVAVGKPGFIPGDWIKEGAIVIDVGINRLENGKVVGDVVFEDAAKRASYITPVPGGVGPMTVATLIENTLQACVEYHDPQGE.

NADP(+) contacts are provided by residues 166-168 and Ile-232; that span reads GAS.

Belongs to the tetrahydrofolate dehydrogenase/cyclohydrolase family. As to quaternary structure, homodimer.

It carries out the reaction (6R)-5,10-methylene-5,6,7,8-tetrahydrofolate + NADP(+) = (6R)-5,10-methenyltetrahydrofolate + NADPH. The catalysed reaction is (6R)-5,10-methenyltetrahydrofolate + H2O = (6R)-10-formyltetrahydrofolate + H(+). Its pathway is one-carbon metabolism; tetrahydrofolate interconversion. Catalyzes the oxidation of 5,10-methylenetetrahydrofolate to 5,10-methenyltetrahydrofolate and then the hydrolysis of 5,10-methenyltetrahydrofolate to 10-formyltetrahydrofolate. The polypeptide is Bifunctional protein FolD (Escherichia coli (strain UTI89 / UPEC)).